We begin with the raw amino-acid sequence, 256 residues long: Thiazole synthase (256 aa).

Residue Lys-96 is the Schiff-base intermediate with DXP of the active site. 1-deoxy-D-xylulose 5-phosphate contacts are provided by residues Gly-157, 184–185 (AG), and 206–207 (NT).

The protein belongs to the ThiG family. In terms of assembly, homotetramer. Forms heterodimers with either ThiH or ThiS.

It is found in the cytoplasm. The enzyme catalyses [ThiS sulfur-carrier protein]-C-terminal-Gly-aminoethanethioate + 2-iminoacetate + 1-deoxy-D-xylulose 5-phosphate = [ThiS sulfur-carrier protein]-C-terminal Gly-Gly + 2-[(2R,5Z)-2-carboxy-4-methylthiazol-5(2H)-ylidene]ethyl phosphate + 2 H2O + H(+). It functions in the pathway cofactor biosynthesis; thiamine diphosphate biosynthesis. Catalyzes the rearrangement of 1-deoxy-D-xylulose 5-phosphate (DXP) to produce the thiazole phosphate moiety of thiamine. Sulfur is provided by the thiocarboxylate moiety of the carrier protein ThiS. In vitro, sulfur can be provided by H(2)S. The chain is Thiazole synthase from Bartonella tribocorum (strain CIP 105476 / IBS 506).